A 288-amino-acid chain; its full sequence is Quinate/shikimate dehydrogenase (288 aa).

Residues K71 and D107 each contribute to the substrate site. NAD(+) contacts are provided by residues 132–135 (AGGA), 155–158 (NRRD), K205, 232–235 (CVYN), and G255.

Belongs to the shikimate dehydrogenase family. In terms of assembly, homodimer.

The enzyme catalyses L-quinate + NAD(+) = 3-dehydroquinate + NADH + H(+). It catalyses the reaction L-quinate + NADP(+) = 3-dehydroquinate + NADPH + H(+). It carries out the reaction shikimate + NADP(+) = 3-dehydroshikimate + NADPH + H(+). The catalysed reaction is shikimate + NAD(+) = 3-dehydroshikimate + NADH + H(+). The protein operates within metabolic intermediate biosynthesis; chorismate biosynthesis; chorismate from D-erythrose 4-phosphate and phosphoenolpyruvate: step 4/7. In terms of biological role, the actual biological function of YdiB remains unclear, nor is it known whether 3-dehydroshikimate or quinate represents the natural substrate. Catalyzes the reversible NAD-dependent reduction of both 3-dehydroshikimate (DHSA) and 3-dehydroquinate to yield shikimate (SA) and quinate, respectively. It can use both NAD or NADP for catalysis, however it has higher catalytic efficiency with NAD. The protein is Quinate/shikimate dehydrogenase of Escherichia coli (strain 55989 / EAEC).